A 144-amino-acid polypeptide reads, in one-letter code: 3-dehydroquinate dehydratase (144 aa).

The active-site Proton acceptor is the Tyr-24. Substrate-binding residues include Asn-73, His-79, and Asp-86. His-99 (proton donor) is an active-site residue. Substrate-binding positions include 100 to 101 (LS) and Arg-110.

It belongs to the type-II 3-dehydroquinase family. In terms of assembly, homododecamer.

It carries out the reaction 3-dehydroquinate = 3-dehydroshikimate + H2O. It participates in metabolic intermediate biosynthesis; chorismate biosynthesis; chorismate from D-erythrose 4-phosphate and phosphoenolpyruvate: step 3/7. In terms of biological role, catalyzes a trans-dehydration via an enolate intermediate. The chain is 3-dehydroquinate dehydratase from Shewanella sp. (strain ANA-3).